The primary structure comprises 201 residues: Cytochrome c oxidase assembly protein CtaG (201 aa).

At 1-13 (MTDQGENEKKQRR) the chain is on the cytoplasmic side. A helical; Signal-anchor for type II membrane protein transmembrane segment spans residues 14–36 (SNATIAVACLSFFVCMIGAAYAS). Residues 37 to 201 (VPLYRIFCQV…KAVGSTRNGG (165 aa)) are Periplasmic-facing.

This sequence belongs to the COX11/CtaG family.

It localises to the cell inner membrane. Exerts its effect at some terminal stage of cytochrome c oxidase synthesis, probably by being involved in the insertion of the copper B into subunit I. This chain is Cytochrome c oxidase assembly protein CtaG, found in Brucella suis (strain ATCC 23445 / NCTC 10510).